The following is a 125-amino-acid chain: MSEISAEERESGTVFAPKFDSDGLLTAVVQHVDTREVLMVAFMNADALDATRKTGIAHFFSRSRQTLWKKGGTSGNTLAVSQVLVDCDQDAVILLVEPAGPACHTGARTCFYRELDCGALQDVRT.

Residue aspartate 86 coordinates Mg(2+). Zn(2+) is bound at residue cysteine 87. Mg(2+) is bound by residues aspartate 88 and aspartate 90. Zn(2+)-binding residues include cysteine 103 and cysteine 110.

This sequence belongs to the PRA-CH family. As to quaternary structure, homodimer. Requires Mg(2+) as cofactor. The cofactor is Zn(2+).

It is found in the cytoplasm. It catalyses the reaction 1-(5-phospho-beta-D-ribosyl)-5'-AMP + H2O = 1-(5-phospho-beta-D-ribosyl)-5-[(5-phospho-beta-D-ribosylamino)methylideneamino]imidazole-4-carboxamide. Its pathway is amino-acid biosynthesis; L-histidine biosynthesis; L-histidine from 5-phospho-alpha-D-ribose 1-diphosphate: step 3/9. In terms of biological role, catalyzes the hydrolysis of the adenine ring of phosphoribosyl-AMP. The chain is Phosphoribosyl-AMP cyclohydrolase from Erythrobacter litoralis (strain HTCC2594).